A 536-amino-acid chain; its full sequence is Mannuronan C5-epimerase (536 aa).

The signal sequence occupies residues 1–36 (MNSHASNGRSRNWPHALLESALLTSALLMASSVALA). 5 PbH1 repeats span residues 298–320 (TRDF…DPHD), 322–345 (SHGL…IISR), 347–369 (VDNS…VLDR), 371–393 (SVGN…TLYE), and 394–416 (SGNN…RVRN). Residue His319 is the Proton acceptor of the active site.

The protein belongs to the D-mannuronate C5-epimerase family.

It localises to the periplasm. It catalyses the reaction [(1-&gt;4)-beta-D-mannuronosyl](n) = [alginate](n). Its pathway is glycan biosynthesis; alginate biosynthesis. Its function is as follows. Catalyzes the epimerization of beta-D-mannuronate to alpha-L-guluronate during the synthesis of the linear polysaccharide alginate. In addition, is part of a periplasmic protein complex that protects alginate from degradation by AlgL by channeling the newly formed alginate polymer through a scaffold that transfers the alginate polymer through the periplasmic space to the outer membrane secretin AlgE. In Pseudomonas syringae pv. tomato (strain ATCC BAA-871 / DC3000), this protein is Mannuronan C5-epimerase (algG).